A 62-amino-acid polypeptide reads, in one-letter code: Large ribosomal subunit protein bL32 (62 aa).

Residues 1-19 (MPNPKRRHSKARTGNRRAH) are compositionally biased toward basic residues. Residues 1-23 (MPNPKRRHSKARTGNRRAHDHLS) form a disordered region.

The protein belongs to the bacterial ribosomal protein bL32 family.

In Koribacter versatilis (strain Ellin345), this protein is Large ribosomal subunit protein bL32.